The following is a 245-amino-acid chain: Adenosylcobinamide-GDP ribazoletransferase (245 aa).

5 helical membrane-spanning segments follow: residues 35-55 (WFPL…ALGL), 108-128 (IGAF…IGAH), 137-157 (GVLI…AALV), 176-196 (IAIG…TPAI), and 197-217 (TTVT…HLAR).

The protein belongs to the CobS family. Mg(2+) serves as cofactor.

It localises to the cell inner membrane. The enzyme catalyses alpha-ribazole + adenosylcob(III)inamide-GDP = adenosylcob(III)alamin + GMP + H(+). The catalysed reaction is alpha-ribazole 5'-phosphate + adenosylcob(III)inamide-GDP = adenosylcob(III)alamin 5'-phosphate + GMP + H(+). It functions in the pathway cofactor biosynthesis; adenosylcobalamin biosynthesis; adenosylcobalamin from cob(II)yrinate a,c-diamide: step 7/7. Functionally, joins adenosylcobinamide-GDP and alpha-ribazole to generate adenosylcobalamin (Ado-cobalamin). Also synthesizes adenosylcobalamin 5'-phosphate from adenosylcobinamide-GDP and alpha-ribazole 5'-phosphate. The polypeptide is Adenosylcobinamide-GDP ribazoletransferase (Nitratidesulfovibrio vulgaris (strain ATCC 29579 / DSM 644 / CCUG 34227 / NCIMB 8303 / VKM B-1760 / Hildenborough) (Desulfovibrio vulgaris)).